Consider the following 331-residue polypeptide: MSDITFFIVETIIKAVVILSVIATLAGLGTYAERKVLAYMQRRVGPWMVGPAGVLQIVADMIKLFTKEDTMPSGANRFIFLIAPIISASCAFVAMSVIPFLPEFEIFGHVVRPILSDVNIGILFLLSVSGTCVYGTLIGGLASYNKWGVIGSARSVLQLISFEIVNGLSLIPVIMMVGSLSLIDIVHEQNNGITSWFLIKQPVCFVLFTIAAFIECNRTPLCLTENETELVAGCGTAYSGMRWGMFFIGEYANMITYSIVISLIFLGGFNSFWFIPGSLMIFLKASFIFFFMLWTRAAWPHLRPDQLMELCWKICMPIALICIFVTAFVII.

The next 9 membrane-spanning stretches (helical) occupy residues 6–26, 45–65, 78–98, 120–140, 167–187, 193–213, 241–261, 263–283, and 311–331; these read FFIV…ATLA, GPWM…IKLF, FIFL…MSVI, IGIL…LIGG, GLSL…DIVH, ITSW…IAAF, MRWG…SIVI, LIFL…MIFL, and CWKI…FVII.

The protein belongs to the complex I subunit 1 family. NDH-1 is composed of 14 different subunits. Subunits NuoA, H, J, K, L, M, N constitute the membrane sector of the complex.

Its subcellular location is the cell inner membrane. The catalysed reaction is a quinone + NADH + 5 H(+)(in) = a quinol + NAD(+) + 4 H(+)(out). Its function is as follows. NDH-1 shuttles electrons from NADH, via FMN and iron-sulfur (Fe-S) centers, to quinones in the respiratory chain. The immediate electron acceptor for the enzyme in this species is believed to be ubiquinone. Couples the redox reaction to proton translocation (for every two electrons transferred, four hydrogen ions are translocated across the cytoplasmic membrane), and thus conserves the redox energy in a proton gradient. This subunit may bind ubiquinone. This chain is NADH-quinone oxidoreductase subunit H, found in Campylobacter hominis (strain ATCC BAA-381 / DSM 21671 / CCUG 45161 / LMG 19568 / NCTC 13146 / CH001A).